Here is a 140-residue protein sequence, read N- to C-terminus: ATP synthase epsilon chain (140 aa).

Belongs to the ATPase epsilon chain family. In terms of assembly, F-type ATPases have 2 components, CF(1) - the catalytic core - and CF(0) - the membrane proton channel. CF(1) has five subunits: alpha(3), beta(3), gamma(1), delta(1), epsilon(1). CF(0) has three main subunits: a, b and c.

Its subcellular location is the cell inner membrane. Its function is as follows. Produces ATP from ADP in the presence of a proton gradient across the membrane. The sequence is that of ATP synthase epsilon chain from Alkalilimnicola ehrlichii (strain ATCC BAA-1101 / DSM 17681 / MLHE-1).